We begin with the raw amino-acid sequence, 76 residues long: Small ribosomal subunit protein bS16c (76 aa).

This sequence belongs to the bacterial ribosomal protein bS16 family.

The protein localises to the plastid. It localises to the chloroplast. The polypeptide is Small ribosomal subunit protein bS16c (Guillardia theta (Cryptophyte)).